The primary structure comprises 263 residues: MTDIRLYMLQSGTLKCKVHNIKMNQGNGADYEIPVPFFLITHPGGHTVIDGGNAIEVATDPRGHWGGICDVYWPVLDKDQGCVDQIKALGFDPADVKYVVQSHLHLDHTGAIGRFPNATHIVQRSEYEYAFTPDWFAGGGYIRKDFDKPGLKWQFLNGTQDDYYDVYGDGTLTTIFTPGHAPGHQSLLVRLPNSKPLLLTIDAAYTLDHWEEKALPGFLASTVDTVRSVQKLRTYAEKHDATVVTGHDPDAWANFKKAPEFYA.

Residues histidine 103, histidine 105, aspartate 107, histidine 108, histidine 180, aspartate 202, and histidine 247 each contribute to the Zn(2+) site.

Belongs to the metallo-beta-lactamase superfamily. It depends on Zn(2+) as a cofactor.

The enzyme catalyses an N-acyl-L-homoserine lactone + H2O = an N-acyl-L-homoserine + H(+). This chain is N-acyl homoserine lactonase AttM (attM), found in Rhizobium radiobacter (Agrobacterium tumefaciens).